A 333-amino-acid chain; its full sequence is MASRQDRREARAEADARRAAEEIARARDERVMQAEVDARSAADEIARARADRGAATMGADTAHHAAAGGGILESVQEGAKSFVSAVGRTFGGARDTAAEKTSQTADATRDKLGEYKDYTADKARETNDSVARKTNETADATRDKLGEYKDYTADKTQETKDAVAQKASDASEATKNKLGEYKDALARKTRDAKDTTAQKATEFKDGVKATAQETRDATKDTTQTAADKARETAATHDDATDKGQGQGLLGALGNVTGAIKEKLTVSPAATQEHLGGGEERAVKERAAEKAASVYFEEKDRLTRERAAERVDKCVEKCVEGCPDATCAHRHGKM.

Disordered regions lie at residues 1 to 20 (MASRQDRREARAEADARRAA) and 116 to 246 (KDYT…GQGQ). Residues 3–52 (SRQDRREARAEADARRAAEEIARARDERVMQAEVDARSAADEIARARADR) are a coiled coil. Composition is skewed to basic and acidic residues over residues 116 to 163 (KDYT…KDAV), 172 to 219 (EATK…DATK), and 227 to 241 (DKARETAATHDDATD).

Belongs to the LEA type 4 family.

In Oryza sativa subsp. indica (Rice), this protein is Late embryogenesis abundant protein 1 (LEA1).